A 152-amino-acid polypeptide reads, in one-letter code: Nucleoside diphosphate kinase (152 aa).

Positions 11, 59, 87, 93, 104, and 114 each coordinate ATP. The Pros-phosphohistidine intermediate role is filled by His117.

It belongs to the NDK family. In terms of assembly, homotetramer. Mg(2+) is required as a cofactor.

It localises to the cytoplasm. The catalysed reaction is a 2'-deoxyribonucleoside 5'-diphosphate + ATP = a 2'-deoxyribonucleoside 5'-triphosphate + ADP. It catalyses the reaction a ribonucleoside 5'-diphosphate + ATP = a ribonucleoside 5'-triphosphate + ADP. In terms of biological role, major role in the synthesis of nucleoside triphosphates other than ATP. The ATP gamma phosphate is transferred to the NDP beta phosphate via a ping-pong mechanism, using a phosphorylated active-site intermediate. In Prochlorococcus marinus (strain MIT 9215), this protein is Nucleoside diphosphate kinase.